A 37-amino-acid polypeptide reads, in one-letter code: Large ribosomal subunit protein bL36c (37 aa).

Belongs to the bacterial ribosomal protein bL36 family.

It localises to the plastid. The protein resides in the chloroplast. The protein is Large ribosomal subunit protein bL36c of Piper cenocladum (Ant piper).